A 296-amino-acid polypeptide reads, in one-letter code: Nucleotide-binding protein str0831 (296 aa).

An ATP-binding site is contributed by 13–20; that stretch reads GMSGAGKT. GTP is bound at residue 63 to 66; it reads DMRS.

It belongs to the RapZ-like family.

Its function is as follows. Displays ATPase and GTPase activities. The sequence is that of Nucleotide-binding protein str0831 from Streptococcus thermophilus (strain CNRZ 1066).